The following is a 294-amino-acid chain: MSYKSGFVSVIGRPNVGKSTLINNLIGQKVVITSPRPQTTRNSVRGIYTRPEGQIVFVDTPGIHKARNKLDNYMLEKAYESLEDIDVIIFMVDGNYSFGKGDEFIYNQIKGVRVPVIVAMNKIDRINKEIVMERQKNYEERTGFPVIPISASRGTNLDTLVEEIFTFLPEGPQYYPEDMVTDQIEQFVVAELIREKVFILTREEVPYGVAVKIEEMKERDNSTMYIRANIYAEKKSHKKIIIGHKGKMIKKIGRLAREEIEKLLQTKVYLDLWVKIEKDWREKEGLVKRMGYKG.

Positions 4–170 constitute an Era-type G domain; it reads KSGFVSVIGR…VEEIFTFLPE (167 aa). The tract at residues 12 to 19 is G1; it reads GRPNVGKS. 12–19 provides a ligand contact to GTP; sequence GRPNVGKS. The interval 38–42 is G2; the sequence is QTTRN. Positions 59–62 are G3; that stretch reads DTPG. GTP contacts are provided by residues 59 to 63 and 121 to 124; these read DTPGI and NKID. Residues 121–124 are G4; the sequence is NKID. The interval 149-151 is G5; that stretch reads ISA. Residues 201–278 form the KH type-2 domain; that stretch reads TREEVPYGVA…YLDLWVKIEK (78 aa).

It belongs to the TRAFAC class TrmE-Era-EngA-EngB-Septin-like GTPase superfamily. Era GTPase family. Monomer.

Its subcellular location is the cytoplasm. It localises to the cell inner membrane. In terms of biological role, an essential GTPase that binds both GDP and GTP, with rapid nucleotide exchange. Plays a role in 16S rRNA processing and 30S ribosomal subunit biogenesis and possibly also in cell cycle regulation and energy metabolism. This is GTPase Era from Halothermothrix orenii (strain H 168 / OCM 544 / DSM 9562).